Reading from the N-terminus, the 140-residue chain is Vesicle transport protein GOT1 (140 aa).

4 helical membrane-spanning segments follow: residues 12–32 (IGLG…IFVF), 35–55 (GLIA…IGIN), 71–91 (ISFG…GLLL), and 96–116 (FLVL…RIPL).

This sequence belongs to the GOT1 family. Homodimer. No interactions with STL1, STL2, CESA1, CESA3, CESA4, CESA6, CESA7 or CESA8.

It is found in the golgi apparatus membrane. Its function is as follows. May be involved in fusion of ER-derived transport vesicles with the Golgi complex. The chain is Vesicle transport protein GOT1 from Arabidopsis thaliana (Mouse-ear cress).